Here is a 411-residue protein sequence, read N- to C-terminus: Tyrosine--tRNA ligase (411 aa).

Residue tyrosine 34 participates in L-tyrosine binding. The 'HIGH' region signature appears at 39-48; it reads CTATSLHIGS. L-tyrosine is bound by residues tyrosine 171 and glutamine 175. The 'KMSKS' region motif lies at 231 to 235; that stretch reads KMGKT. An ATP-binding site is contributed by lysine 234. The 67-residue stretch at 345–411 folds into the S4 RNA-binding domain; it reads ISAYNLFYNA…GKKRHILVKV (67 aa).

This sequence belongs to the class-I aminoacyl-tRNA synthetase family. TyrS type 1 subfamily. Homodimer.

Its subcellular location is the cytoplasm. It carries out the reaction tRNA(Tyr) + L-tyrosine + ATP = L-tyrosyl-tRNA(Tyr) + AMP + diphosphate + H(+). Its function is as follows. Catalyzes the attachment of tyrosine to tRNA(Tyr) in a two-step reaction: tyrosine is first activated by ATP to form Tyr-AMP and then transferred to the acceptor end of tRNA(Tyr). This is Tyrosine--tRNA ligase from Rickettsia prowazekii (strain Madrid E).